The sequence spans 188 residues: Epididymal-specific lipocalin-5 (188 aa).

The N-terminal stretch at 1-19 (MENIMPFALLGLCVGLAAG) is a signal peptide. Cys82 and Cys176 form a disulfide bridge.

This sequence belongs to the calycin superfamily. Lipocalin family. There are two similar, immunologically cross-reacting forms of this protein, designated B and C, which probably result from different processing of the amino end. Post-translationally, the N-terminus of form C is probably blocked. Synthesized exclusively in the proximal part (caput epididymidis) of the epididymis. It makes up a substantial part of the total protein in the epididymal luminal fluid and binds to the sperm membrane.

Its subcellular location is the secreted. Its function is as follows. Associates with spermatozoa in the epididymal fluid but does not bind tightly to them. Binds both all-trans and 9-cis retinoic acid. May act as a retinoid carrier protein which is required for epididymal function and/or sperm maturation. This chain is Epididymal-specific lipocalin-5 (Lcn5), found in Rattus norvegicus (Rat).